A 700-amino-acid polypeptide reads, in one-letter code: Probable pre-mRNA-splicing factor ATP-dependent RNA helicase DEAH4 (700 aa).

A2 bears the N-acetylalanine mark. The Helicase ATP-binding domain occupies 14–178 (VETVEKNSVV…FSGCPVLNVP (165 aa)). 27 to 34 (GETGSGKS) is a binding site for ATP. The short motif at 124 to 127 (DEAH) is the DEAH box element. Residues 200 to 377 (SLKVAIDIHV…GSVLYLKSLD (178 aa)) enclose the Helicase C-terminal domain. Disordered stretches follow at residues 463 to 486 (PARS…NGSG) and 654 to 682 (GPAP…SENV).

The protein belongs to the DEAD box helicase family. DEAH subfamily. PRP22 sub-subfamily.

It carries out the reaction ATP + H2O = ADP + phosphate + H(+). Its function is as follows. May be involved in pre-mRNA splicing. This Arabidopsis thaliana (Mouse-ear cress) protein is Probable pre-mRNA-splicing factor ATP-dependent RNA helicase DEAH4.